The sequence spans 638 residues: Sodium- and chloride-dependent glycine transporter 1 (638 aa).

The tract at residues 1–29 (MAAAQGPVAPSSLEQNGAVPSEATKKDQN) is disordered. Residues 1 to 40 (MAAAQGPVAPSSLEQNGAVPSEATKKDQNLKRGNWGNQIE) lie on the Cytoplasmic side of the membrane. 3 helical membrane passes run 41–61 (FVLTSVGYAVGLGNVWRFPYL), 69–88 (AFMFPYFIMLIFCGIPLFFM), and 112–132 (GVGYGMMVVSTYIGIYYNVVI). Over 133–219 (CIAFYYFFSS…DDIGNFGEVR (87 aa)) the chain is Extracellular. 4 N-linked (GlcNAc...) asparagine glycosylation sites follow: asparagine 169, asparagine 172, asparagine 182, and asparagine 188. A run of 9 helical transmembrane segments spans residues 220–238 (LPLLGCLGVSWVVVFLCLI), 247–264 (VVYFTATFPYVVLTILFI), 300–317 (IFYSLGCAWGGLVTMASY), 329–350 (VIISITNCATSVYAGFVIFSIL), 383–402 (LPISPLWSLLFFFMLILLGL), 431–449 (YVTLGVAVAGFLLGIPLTS), 465–485 (SFSLVIISCIMCVSIMYIYGH), 506–525 (ICWRFVSPAIIFFILIFSVI), and 544–562 (IGFLMALSSVICIPLYALF). Over 563–638 (QFCRTDGDTL…GSSRFQDSRI (76 aa)) the chain is Cytoplasmic. The segment at 597 to 638 (RYAPTTTPSPEDGLEVQPLHPDKAQIPMVGSNGSSRFQDSRI) is disordered. Position 603 is a phosphothreonine (threonine 603). Phosphoserine occurs at positions 605 and 630. Residues 627 to 638 (SNGSSRFQDSRI) form an essential for interaction with EXOC1 region. Residues 627-638 (SNGSSRFQDSRI) are compositionally biased toward polar residues.

Belongs to the sodium:neurotransmitter symporter (SNF) (TC 2.A.22) family. SLC6A9 subfamily. Interacts with EXOC1; interaction increases the transporter capacity of SLC6A9 probably by promoting its insertion into the cell membrane. Interacts with EXOC3 and EXOC4.

Its subcellular location is the cell membrane. The catalysed reaction is glycine(out) + chloride(out) + 2 Na(+)(out) = glycine(in) + chloride(in) + 2 Na(+)(in). Sodium- and chloride-dependent glycine transporter which is essential for regulating glycine concentrations at inhibitory glycinergic synapses. This is Sodium- and chloride-dependent glycine transporter 1 (SLC6A9) from Bos taurus (Bovine).